Consider the following 160-residue polypeptide: Arginine repressor (160 aa).

This sequence belongs to the ArgR family.

It is found in the cytoplasm. It functions in the pathway amino-acid biosynthesis; L-arginine biosynthesis [regulation]. In terms of biological role, regulates arginine biosynthesis genes. This chain is Arginine repressor, found in Anaeromyxobacter sp. (strain K).